A 1097-amino-acid polypeptide reads, in one-letter code: Translation initiation factor IF-2 (1097 aa).

Positions Leu-79 to Ala-458 are disordered. Basic and acidic residues predominate over residues Ala-97–Leu-112. Residues Ala-157–Glu-173 show a composition bias toward low complexity. 2 stretches are compositionally biased toward basic and acidic residues: residues Glu-174–Ser-190 and Val-202–Glu-221. A compositionally biased stretch (low complexity) spans Thr-224 to Ala-236. The segment covering Arg-258–Ser-267 has biased composition (polar residues). Basic and acidic residues predominate over residues Glu-268–Met-286. Polar residues predominate over residues Ser-340 to Asn-363. The segment covering His-376 to Asn-385 has biased composition (basic residues). Residues Pro-402–Leu-443 are compositionally biased toward basic and acidic residues. In terms of domain architecture, tr-type G spans Thr-591 to Lys-761. Residues Gly-600–Thr-607 form a G1 region. Gly-600 to Thr-607 contributes to the GTP binding site. The G2 stretch occupies residues Gly-625–His-629. The segment at Asp-647–Gly-650 is G3. Residues Asp-647–His-651 and Asn-701–Asp-704 contribute to the GTP site. Residues Asn-701 to Asp-704 form a G4 region. Residues Ser-737–Lys-739 are G5.

Belongs to the TRAFAC class translation factor GTPase superfamily. Classic translation factor GTPase family. IF-2 subfamily.

The protein resides in the cytoplasm. One of the essential components for the initiation of protein synthesis. Protects formylmethionyl-tRNA from spontaneous hydrolysis and promotes its binding to the 30S ribosomal subunits. Also involved in the hydrolysis of GTP during the formation of the 70S ribosomal complex. The protein is Translation initiation factor IF-2 of Chloroherpeton thalassium (strain ATCC 35110 / GB-78).